A 226-amino-acid polypeptide reads, in one-letter code: Beta-casein (226 aa).

The disordered stretch occupies residues 1–51; sequence REKEELNVSSETVESLSSNEPDSSSEESITHINKEKSQKFKHEGQQQREVE. A Phosphoserine modification is found at S9. T12 is subject to Phosphothreonine. Phosphoserine is present on residues S15, S17, S18, and S25. A compositionally biased stretch (basic and acidic residues) spans 28 to 51; sequence SITHINKEKSQKFKHEGQQQREVE.

This sequence belongs to the beta-casein family. Post-translationally, there are at least three different forms found in milk, with varying degrees of phosphorylation. These include form 5-P which is phosphorylated at three sites, this form is present in low amounts, form 6-P which is phosphorylated at six sites, and form 7-P which is phosphorylated at seven sites. In terms of tissue distribution, mammary gland specific. Secreted in milk.

Its subcellular location is the secreted. In terms of biological role, important role in determination of the surface properties of the casein micelles. The sequence is that of Beta-casein from Equus asinus (Donkey).